The chain runs to 469 residues: Serine/threonine-protein kinase orb6 (469 aa).

The 300-residue stretch at 93-392 (FSTIKVIGKG…AIEIMQHPFF (300 aa)) folds into the Protein kinase domain. ATP-binding positions include 99–107 (IGKGAFGEV) and K122. The Proton acceptor role is filled by D216. One can recognise an AGC-kinase C-terminal domain in the interval 393–467 (TGIDWDHIRE…KKFNYLTMKG (75 aa)).

The protein belongs to the protein kinase superfamily. Ser/Thr protein kinase family. Interacts with mob2.

The enzyme catalyses L-seryl-[protein] + ATP = O-phospho-L-seryl-[protein] + ADP + H(+). It carries out the reaction L-threonyl-[protein] + ATP = O-phospho-L-threonyl-[protein] + ADP + H(+). Its function is as follows. Interacts with pak1/shk1 and coordinates cell morphogenesis with the cell cycle. It is essential for maintenance of cell polarity and is involved in mitotic control. This Schizosaccharomyces pombe (strain 972 / ATCC 24843) (Fission yeast) protein is Serine/threonine-protein kinase orb6 (orb6).